The sequence spans 207 residues: Early nodulin-like protein 11 (207 aa).

The signal sequence occupies residues 1–24 (MVSLISIVSVVFLLFTTFYHFGEA). Positions 25 to 130 (RIINVGGSLD…GEKVTVVVQS (106 aa)) constitute a Phytocyanin domain. Asparagine 43 carries N-linked (GlcNAc...) asparagine glycosylation. A disulfide bridge links cysteine 83 with cysteine 118. Residues 129–179 (QSPNHPKPGPAAVTPTLPPKPSTTPAAPAPAPPTPSPKSSTSTMAPAPAPA) form a disordered region. A compositionally biased stretch (pro residues) spans 144 to 164 (TLPPKPSTTPAAPAPAPPTPS). Residues 165 to 179 (PKSSTSTMAPAPAPA) are compositionally biased toward low complexity. A lipid anchor (GPI-anchor amidated serine) is attached at serine 181. The propeptide at 182 to 207 (SAVGLVAGNGIFWASTLVAVIGLAFA) is removed in mature form.

It belongs to the early nodulin-like (ENODL) family. As to expression, confined to flowers and siliques.

It localises to the cell membrane. In terms of biological role, may act as a carbohydrate transporter. Required, together with ENODL11, ENODL12, ENODL13, ENODL14 and ENODL15, for male-female communication and pollen tube reception and burst at the synergid cell surface of the female gametophyte. This chain is Early nodulin-like protein 11, found in Arabidopsis thaliana (Mouse-ear cress).